The primary structure comprises 564 residues: Periplasmic [NiFe] hydrogenase large subunit (564 aa).

Ni(2+)-binding residues include Cys-72, Cys-75, Cys-543, and Cys-546. A propeptide spanning residues 550–564 is cleaved from the precursor; that stretch reads VIEPETNEILKFKVC.

It belongs to the [NiFe]/[NiFeSe] hydrogenase large subunit family. In terms of assembly, heterodimer of a large and a small subunit. It depends on Ni(2+) as a cofactor.

The protein resides in the periplasm. It catalyses the reaction 2 Fe(III)-[cytochrome c3] + H2 = 2 Fe(II)-[cytochrome c3] + 2 H(+). The chain is Periplasmic [NiFe] hydrogenase large subunit (hydB) from Solidesulfovibrio fructosivorans (Desulfovibrio fructosivorans).